We begin with the raw amino-acid sequence, 351 residues long: Dihydroorotate dehydrogenase (quinone) (351 aa).

FMN contacts are provided by residues 67–71 (AGFDK) and Thr-91. Lys-71 is a binding site for substrate. 116–120 (NAMGF) contacts substrate. FMN contacts are provided by Asn-145 and Asn-178. Asn-178 provides a ligand contact to substrate. Ser-181 serves as the catalytic Nucleophile. Residue Asn-183 participates in substrate binding. Residues Lys-214 and Thr-242 each contribute to the FMN site. 243–244 (NT) serves as a coordination point for substrate. FMN-binding positions include Gly-262, Gly-291, and 312–313 (YS).

Belongs to the dihydroorotate dehydrogenase family. Type 2 subfamily. In terms of assembly, monomer. FMN is required as a cofactor.

It localises to the cell membrane. It carries out the reaction (S)-dihydroorotate + a quinone = orotate + a quinol. It participates in pyrimidine metabolism; UMP biosynthesis via de novo pathway; orotate from (S)-dihydroorotate (quinone route): step 1/1. Functionally, catalyzes the conversion of dihydroorotate to orotate with quinone as electron acceptor. The chain is Dihydroorotate dehydrogenase (quinone) from Helicobacter acinonychis (strain Sheeba).